The sequence spans 80 residues: MKRILIAPVRFYQRFISPVFPPSCRFDLTCSNYMIQAIEKHGFKGVLMGLARILRCHPWSKTGKDPVPDHFSLKRNQEGE.

Residues 61-80 (KTGKDPVPDHFSLKRNQEGE) form a disordered region. A compositionally biased stretch (basic and acidic residues) spans 62 to 80 (TGKDPVPDHFSLKRNQEGE).

Belongs to the UPF0161 family.

It localises to the cell membrane. Could be involved in insertion of integral membrane proteins into the membrane. The chain is Putative membrane protein insertion efficiency factor from Streptococcus pneumoniae (strain 70585).